The sequence spans 303 residues: Diaminopimelate epimerase (303 aa).

Substrate contacts are provided by Asn15, Gln47, and Asn67. Residue Cys76 is the Proton donor of the active site. Residues 77 to 78, Asn163, Asn197, and 215 to 216 contribute to the substrate site; these read GN and ER. Cys224 functions as the Proton acceptor in the catalytic mechanism. Residue 225–226 coordinates substrate; that stretch reads GS. The tract at residues 278–303 is disordered; the sequence is FDPATGEWSRDTQGLQGSGNADRGAA.

It belongs to the diaminopimelate epimerase family. In terms of assembly, homodimer.

It is found in the cytoplasm. The enzyme catalyses (2S,6S)-2,6-diaminopimelate = meso-2,6-diaminopimelate. The protein operates within amino-acid biosynthesis; L-lysine biosynthesis via DAP pathway; DL-2,6-diaminopimelate from LL-2,6-diaminopimelate: step 1/1. Functionally, catalyzes the stereoinversion of LL-2,6-diaminopimelate (L,L-DAP) to meso-diaminopimelate (meso-DAP), a precursor of L-lysine and an essential component of the bacterial peptidoglycan. In Brucella melitensis biotype 1 (strain ATCC 23456 / CCUG 17765 / NCTC 10094 / 16M), this protein is Diaminopimelate epimerase.